The chain runs to 244 residues: Phosphoadenosine 5'-phosphosulfate reductase (244 aa).

The active-site Nucleophile; cysteine thiosulfonate intermediate is the C239.

Belongs to the PAPS reductase family. CysH subfamily.

It is found in the cytoplasm. The enzyme catalyses [thioredoxin]-disulfide + sulfite + adenosine 3',5'-bisphosphate + 2 H(+) = [thioredoxin]-dithiol + 3'-phosphoadenylyl sulfate. It functions in the pathway sulfur metabolism; hydrogen sulfide biosynthesis; sulfite from sulfate: step 3/3. Its function is as follows. Catalyzes the formation of sulfite from phosphoadenosine 5'-phosphosulfate (PAPS) using thioredoxin as an electron donor. This is Phosphoadenosine 5'-phosphosulfate reductase from Serratia proteamaculans (strain 568).